The following is a 512-amino-acid chain: ATP synthase subunit alpha (512 aa).

169–176 (GDRQTGKT) contacts ATP.

This sequence belongs to the ATPase alpha/beta chains family. F-type ATPases have 2 components, CF(1) - the catalytic core - and CF(0) - the membrane proton channel. CF(1) has five subunits: alpha(3), beta(3), gamma(1), delta(1), epsilon(1). CF(0) has three main subunits: a(1), b(2) and c(9-12). The alpha and beta chains form an alternating ring which encloses part of the gamma chain. CF(1) is attached to CF(0) by a central stalk formed by the gamma and epsilon chains, while a peripheral stalk is formed by the delta and b chains.

The protein resides in the cell inner membrane. The enzyme catalyses ATP + H2O + 4 H(+)(in) = ADP + phosphate + 5 H(+)(out). Produces ATP from ADP in the presence of a proton gradient across the membrane. The alpha chain is a regulatory subunit. The polypeptide is ATP synthase subunit alpha (Aromatoleum aromaticum (strain DSM 19018 / LMG 30748 / EbN1) (Azoarcus sp. (strain EbN1))).